A 200-amino-acid polypeptide reads, in one-letter code: Dephospho-CoA kinase (200 aa).

The DPCK domain occupies 4 to 200; it reads VLALTGGIAT…QLLIKIKEEG (197 aa). 12–17 provides a ligand contact to ATP; sequence ATGKST.

The protein belongs to the CoaE family.

Its subcellular location is the cytoplasm. It catalyses the reaction 3'-dephospho-CoA + ATP = ADP + CoA + H(+). Its pathway is cofactor biosynthesis; coenzyme A biosynthesis; CoA from (R)-pantothenate: step 5/5. Catalyzes the phosphorylation of the 3'-hydroxyl group of dephosphocoenzyme A to form coenzyme A. This chain is Dephospho-CoA kinase, found in Lactobacillus acidophilus (strain ATCC 700396 / NCK56 / N2 / NCFM).